We begin with the raw amino-acid sequence, 357 residues long: Peptide chain release factor 1 (357 aa).

Glutamine 232 is modified (N5-methylglutamine).

This sequence belongs to the prokaryotic/mitochondrial release factor family. In terms of processing, methylated by PrmC. Methylation increases the termination efficiency of RF1.

It is found in the cytoplasm. Peptide chain release factor 1 directs the termination of translation in response to the peptide chain termination codons UAG and UAA. This is Peptide chain release factor 1 from Nitratidesulfovibrio vulgaris (strain ATCC 29579 / DSM 644 / CCUG 34227 / NCIMB 8303 / VKM B-1760 / Hildenborough) (Desulfovibrio vulgaris).